Here is a 373-residue protein sequence, read N- to C-terminus: NADH-quinone oxidoreductase subunit D (373 aa).

The protein belongs to the complex I 49 kDa subunit family. NDH-1 is composed of 14 different subunits. Subunits NuoB, C, D, E, F, and G constitute the peripheral sector of the complex.

Its subcellular location is the cell inner membrane. The catalysed reaction is a quinone + NADH + 5 H(+)(in) = a quinol + NAD(+) + 4 H(+)(out). In terms of biological role, NDH-1 shuttles electrons from NADH, via FMN and iron-sulfur (Fe-S) centers, to quinones in the respiratory chain. The immediate electron acceptor for the enzyme in this species is believed to be ubiquinone. Couples the redox reaction to proton translocation (for every two electrons transferred, four hydrogen ions are translocated across the cytoplasmic membrane), and thus conserves the redox energy in a proton gradient. This Syntrophobacter fumaroxidans (strain DSM 10017 / MPOB) protein is NADH-quinone oxidoreductase subunit D.